A 215-amino-acid chain; its full sequence is Outer-membrane lipoprotein LolB (215 aa).

An N-terminal signal peptide occupies residues 1-21; sequence MLIPKKYYLLIILLSNCLLAS. Cysteine 22 carries N-palmitoyl cysteine lipidation. The S-diacylglycerol cysteine moiety is linked to residue cysteine 22.

It belongs to the LolB family. In terms of assembly, monomer.

The protein localises to the cell outer membrane. Plays a critical role in the incorporation of lipoproteins in the outer membrane after they are released by the LolA protein. In Baumannia cicadellinicola subsp. Homalodisca coagulata, this protein is Outer-membrane lipoprotein LolB.